Here is a 162-residue protein sequence, read N- to C-terminus: Putative 4-hydroxy-4-methyl-2-oxoglutarate aldolase (162 aa).

Residues G75–L78 and R97 contribute to the substrate site. A divalent metal cation is bound at residue D98.

It belongs to the class II aldolase/RraA-like family. Homotrimer. A divalent metal cation is required as a cofactor.

The enzyme catalyses 4-hydroxy-4-methyl-2-oxoglutarate = 2 pyruvate. It catalyses the reaction oxaloacetate + H(+) = pyruvate + CO2. Catalyzes the aldol cleavage of 4-hydroxy-4-methyl-2-oxoglutarate (HMG) into 2 molecules of pyruvate. Also contains a secondary oxaloacetate (OAA) decarboxylase activity due to the common pyruvate enolate transition state formed following C-C bond cleavage in the retro-aldol and decarboxylation reactions. The protein is Putative 4-hydroxy-4-methyl-2-oxoglutarate aldolase of Pseudomonas aeruginosa (strain LESB58).